The sequence spans 222 residues: Methylthioribulose-1-phosphate dehydratase (222 aa).

Zn(2+) contacts are provided by His-94 and His-96.

This sequence belongs to the aldolase class II family. MtnB subfamily. Zn(2+) serves as cofactor.

The enzyme catalyses 5-(methylsulfanyl)-D-ribulose 1-phosphate = 5-methylsulfanyl-2,3-dioxopentyl phosphate + H2O. The protein operates within amino-acid biosynthesis; L-methionine biosynthesis via salvage pathway; L-methionine from S-methyl-5-thio-alpha-D-ribose 1-phosphate: step 2/6. Functionally, catalyzes the dehydration of methylthioribulose-1-phosphate (MTRu-1-P) into 2,3-diketo-5-methylthiopentyl-1-phosphate (DK-MTP-1-P). This Yersinia pseudotuberculosis serotype IB (strain PB1/+) protein is Methylthioribulose-1-phosphate dehydratase.